The primary structure comprises 202 residues: Recombination protein RecR (202 aa).

The C4-type zinc finger occupies 58-73; it reads CANCGNLTDKKLCDIC. The Toprim domain occupies 81 to 178; sequence SVITVVEDSM…KVSRIAMGVP (98 aa).

Belongs to the RecR family.

May play a role in DNA repair. It seems to be involved in an RecBC-independent recombinational process of DNA repair. It may act with RecF and RecO. In Finegoldia magna (strain ATCC 29328 / DSM 20472 / WAL 2508) (Peptostreptococcus magnus), this protein is Recombination protein RecR.